Here is a 606-residue protein sequence, read N- to C-terminus: Phosphomethylpyrimidine synthase (606 aa).

The disordered stretch occupies residues 84–103 (EPYPARSVKPEDNGLTSSPI). Residues N209, M238, Y267, H303, 323 to 325 (SRG), 364 to 367 (DGLR), and E403 each bind substrate. H407 is a binding site for Zn(2+). Y430 is a binding site for substrate. Position 471 (H471) interacts with Zn(2+). Residues C551, C554, and C559 each coordinate [4Fe-4S] cluster.

It belongs to the ThiC family. As to quaternary structure, homodimer. Requires [4Fe-4S] cluster as cofactor.

The catalysed reaction is 5-amino-1-(5-phospho-beta-D-ribosyl)imidazole + S-adenosyl-L-methionine = 4-amino-2-methyl-5-(phosphooxymethyl)pyrimidine + CO + 5'-deoxyadenosine + formate + L-methionine + 3 H(+). It participates in cofactor biosynthesis; thiamine diphosphate biosynthesis. Catalyzes the synthesis of the hydroxymethylpyrimidine phosphate (HMP-P) moiety of thiamine from aminoimidazole ribotide (AIR) in a radical S-adenosyl-L-methionine (SAM)-dependent reaction. The chain is Phosphomethylpyrimidine synthase from Bartonella tribocorum (strain CIP 105476 / IBS 506).